The sequence spans 294 residues: Ribosomal protein L11 methyltransferase (294 aa).

S-adenosyl-L-methionine contacts are provided by threonine 145, glycine 166, aspartate 188, and asparagine 227.

It belongs to the methyltransferase superfamily. PrmA family.

Its subcellular location is the cytoplasm. It carries out the reaction L-lysyl-[protein] + 3 S-adenosyl-L-methionine = N(6),N(6),N(6)-trimethyl-L-lysyl-[protein] + 3 S-adenosyl-L-homocysteine + 3 H(+). Methylates ribosomal protein L11. This Hydrogenovibrio crunogenus (strain DSM 25203 / XCL-2) (Thiomicrospira crunogena) protein is Ribosomal protein L11 methyltransferase.